A 147-amino-acid chain; its full sequence is UPF0310 protein in gntR 5'region (147 aa).

Belongs to the UPF0310 family.

In Bacillus licheniformis, this protein is UPF0310 protein in gntR 5'region (oug).